The following is a 1002-amino-acid chain: Hypoxia up-regulated protein 1 (1002 aa).

A signal peptide spans 1 to 23 (MARAPRWMLGWLLLACCVPHTEP). Disordered regions lie at residues 576-698 (LFGG…PKKQ) and 918-1002 (KPKP…NDEL). Residues 643 to 675 (PPKEESQKNEEGEKSEARDPKEDKETVNEEELS) show a composition bias toward basic and acidic residues. Residues 933–947 (GKNATGTSESENTIP) are compositionally biased toward polar residues. Basic and acidic residues-rich tracts occupy residues 951–962 (GKQEEKPEDISP) and 983–1002 (SSKKEKKPEAGGESRKNDEL). The Prevents secretion from ER motif lies at 999-1002 (NDEL).

Belongs to the heat shock protein 70 family.

It is found in the endoplasmic reticulum lumen. Functionally, has a pivotal role in cytoprotective cellular mechanisms triggered by oxygen deprivation. Promotes HSPA5/BiP-mediated ATP nucleotide exchange and thereby activates the unfolded protein response (UPR) pathway in the presence of endoplasmic reticulum stress. May play a role as a molecular chaperone and participate in protein folding. The polypeptide is Hypoxia up-regulated protein 1 (HYOU1) (Gallus gallus (Chicken)).